We begin with the raw amino-acid sequence, 549 residues long: Cation/acetate symporter ActP (549 aa).

The next 13 membrane-spanning stretches (helical) occupy residues W33–A53, L77–F97, G103–E123, I148–G168, I183–A203, W206–V226, I262–L282, G303–V323, L355–L375, V404–E424, I428–L448, G464–V484, and I493–F513.

Belongs to the sodium:solute symporter (SSF) (TC 2.A.21) family.

The protein localises to the cell inner membrane. In terms of biological role, transports acetate. This is Cation/acetate symporter ActP from Escherichia coli O6:K15:H31 (strain 536 / UPEC).